The chain runs to 532 residues: KICSTOR complex protein ITFG2 (532 aa).

The FG-GAP 1; atypical repeat unit spans residues 19-48; sequence FPHAICLGDVDNDTLNELVVGDTSGKLSVY. The residue at position 104 (S104) is a Phosphoserine. The FG-GAP 2; atypical repeat unit spans residues 126–155; that stretch reads NTKVMLISDIDGDGRCELVVGYTDRVVRAF. The segment at 248–271 is disordered; that stretch reads PHPQQERLHSPHRQHQASHSPDSS.

Part of the KICSTOR complex composed of KPTN, ITFG2, KICS2 and SZT2. SZT2 probably serves as a link between the other three proteins in the KICSTOR complex and may mediate the direct interaction with the GATOR complex via GATOR1. The KICSTOR complex interacts directly with the GATOR1 complex and most probably indirectly with the GATOR2 complex in an amino acid-independent manner.

Its subcellular location is the lysosome membrane. As part of the KICSTOR complex functions in the amino acid-sensing branch of the TORC1 signaling pathway. Recruits, in an amino acid-independent manner, the GATOR1 complex to the lysosomal membranes and allows its interaction with GATOR2 and the RAG GTPases. Functions upstream of the RAG GTPases and is required to negatively regulate mTORC1 signaling in absence of amino acids. In absence of the KICSTOR complex mTORC1 is constitutively localized to the lysosome and activated. The KICSTOR complex is also probably involved in the regulation of mTORC1 by glucose. In Bos taurus (Bovine), this protein is KICSTOR complex protein ITFG2.